Reading from the N-terminus, the 130-residue chain is L-ectoine synthase (130 aa).

The protein belongs to the ectoine synthase family.

The enzyme catalyses (2S)-4-acetamido-2-aminobutanoate = L-ectoine + H2O. The protein operates within amine and polyamine biosynthesis; ectoine biosynthesis; L-ectoine from L-aspartate 4-semialdehyde: step 3/3. Its function is as follows. Catalyzes the circularization of gamma-N-acetyl-alpha,gamma-diaminobutyric acid (ADABA) to ectoine (1,4,5,6-tetrahydro-2-methyl-4-pyrimidine carboxylic acid), which is an excellent osmoprotectant. The polypeptide is L-ectoine synthase (Mycobacteroides abscessus (strain ATCC 19977 / DSM 44196 / CCUG 20993 / CIP 104536 / JCM 13569 / NCTC 13031 / TMC 1543 / L948) (Mycobacterium abscessus)).